Reading from the N-terminus, the 147-residue chain is Hemoglobin subunit beta (147 aa).

Valine 2 is subject to N-acetylvaline. The Globin domain maps to 3–147 (HLADDEKAAV…VSTALAHKYH (145 aa)). Serine 45 bears the Phosphoserine mark. Lysine 60 bears the N6-acetyllysine mark. Histidine 64 is a binding site for heme b. An N6-acetyllysine modification is found at lysine 83. Histidine 93 is a heme b binding site. Cysteine 94 carries the S-nitrosocysteine modification. At lysine 145 the chain carries N6-acetyllysine.

It belongs to the globin family. In terms of assembly, heterotetramer of two alpha chains and two beta chains. Red blood cells.

Its function is as follows. Involved in oxygen transport from the lung to the various peripheral tissues. The protein is Hemoglobin subunit beta (HBB) of Bradypus tridactylus (Pale-throated three-toed sloth).